A 364-amino-acid chain; its full sequence is Nucleosome assembly protein 1;2 (364 aa).

A coiled-coil region spans residues 32-86 (VESIKNTLQGLAARHTDVLESLEPKVRKRVEVLREIQSQHDDLEAKFFEERAALE). Residues 53-68 (LEPKVRKRVEVLREIQ) carry the Nuclear export signal motif. Positions 227-232 (KKKPKK) match the Nuclear localization signal motif. 2 disordered regions span residues 250–269 (FNFFSPPQVPDDDEEIDEDT) and 301–364 (GEAA…CKQQ). 2 stretches are compositionally biased toward acidic residues: residues 259–269 (PDDDEEIDEDT) and 304–340 (AQDEDFEGIMDDEDDDDEDDDDDEDEDDEGDDEDDED). Cysteine methyl ester is present on cysteine 361. Cysteine 361 carries the S-farnesyl cysteine lipid modification. A propeptide spans 362 to 364 (KQQ) (removed in mature form).

The protein belongs to the nucleosome assembly protein (NAP) family.

It localises to the nucleus. It is found in the cytoplasm. In terms of biological role, may modulate chromatin structure by regulation of nucleosome assembly/disassembly. In Oryza sativa subsp. japonica (Rice), this protein is Nucleosome assembly protein 1;2 (NAP1;2).